Consider the following 256-residue polypeptide: MATLISLNDANRMLIADSQEEFLQIACYDWISTANKAIHKRGAFYVALSGGKTPLQIFQEIVKKRAAISDCSKIVVFWGDERANEDVEAGSNYLKAMDILKGLRIPEDQIFRMDTADPKGDEAYEALIQKYVPDAIFDMVMLGVGEDGHTLSLFPETHALEEKERFVVFNEVPQLHTRRMTLTFPIVRQARHLVAYVQGENKQDLFHKLVHPLGRDTFPIERVGTPLNPVQWVLSSDSCRKTDLADIPADCKLEMF.

It belongs to the glucosamine/galactosamine-6-phosphate isomerase family. 6-phosphogluconolactonase subfamily.

The enzyme catalyses 6-phospho-D-glucono-1,5-lactone + H2O = 6-phospho-D-gluconate + H(+). It functions in the pathway carbohydrate degradation; pentose phosphate pathway; D-ribulose 5-phosphate from D-glucose 6-phosphate (oxidative stage): step 2/3. Functionally, hydrolysis of 6-phosphogluconolactone to 6-phosphogluconate. In Chlamydia trachomatis serovar D (strain ATCC VR-885 / DSM 19411 / UW-3/Cx), this protein is 6-phosphogluconolactonase (pgl).